The primary structure comprises 206 residues: Small ribosomal subunit protein uS4 (206 aa).

An S4 RNA-binding domain is found at 96-156; sequence GRLDNVVYRM…EKAKKQSRVK (61 aa).

It belongs to the universal ribosomal protein uS4 family. In terms of assembly, part of the 30S ribosomal subunit. Contacts protein S5. The interaction surface between S4 and S5 is involved in control of translational fidelity.

Its function is as follows. One of the primary rRNA binding proteins, it binds directly to 16S rRNA where it nucleates assembly of the body of the 30S subunit. Functionally, with S5 and S12 plays an important role in translational accuracy. This Pectobacterium atrosepticum (strain SCRI 1043 / ATCC BAA-672) (Erwinia carotovora subsp. atroseptica) protein is Small ribosomal subunit protein uS4.